The following is a 2058-amino-acid chain: Unconventional myosin-X (2058 aa).

An N-acetylmethionine modification is found at methionine 1. Residues 63–739 (EGVDDMASLT…LEQKLEKRRE (677 aa)) enclose the Myosin motor domain. ATP is bound by residues asparagine 104, tyrosine 113, 160–165 (GAGKTE), and asparagine 215. Residues 619–641 (LHSLMATLSSSNPFFVRCIKPNM) form an actin-binding region. IQ domains follow at residues 742-763 (VSHAAMVIRAHVLGFLARKQYR), 764-787 (KVLYCVVIIQKNYRAFLLRRRFLH), and 788-817 (LKKAAIVFQKQLRGQIARRVYRQLLAEKRE). Residues 814 to 883 (EKREQEEKKK…LTRELEKQKE (70 aa)) form an SAH region. Disordered stretches follow at residues 819 to 840 (EEKKKQEEEEKKKREEEERERE) and 847 to 866 (ELRAQQEEETRKQQELEALQ). Over residues 847 to 861 (ELRAQQEEETRKQQE) the composition is skewed to basic and acidic residues. Positions 884-934 (NKQVEEILRLEKEIEDLQRMKEQQELSLTEASLQKLQERRDQELRRLEEEA) form a coiled coil. Phosphoserine occurs at positions 962, 965, and 968. Residues 964 to 1090 (GSEFSSELAE…DLPSPDGDYD (127 aa)) form a disordered region. The span at 989 to 1003 (PEEEVDEGFEADDDA) shows a compositional bias: acidic residues. The segment covering 1040 to 1049 (VVPTSPSADS) has biased composition (polar residues). Residues 1060–1071 (SGSLHNSSSGES) show a composition bias toward low complexity. Threonine 1158 carries the phosphothreonine modification. PH domains lie at 1212–1310 (EALK…QVHA) and 1392–1497 (EFIV…NVTD). One can recognise a MyTH4 domain in the interval 1547-1695 (LPYGDINLNL…PSRDEIEALI (149 aa)). The region spanning 1700-2044 (MTSTVYCHGG…AYISMIVKKR (345 aa)) is the FERM domain.

It belongs to the TRAFAC class myosin-kinesin ATPase superfamily. Myosin family. Monomer, when in an inactive conformation in the cytosol. Homodimer in its active, membrane-bound conformation; antiparallel coiled coil-mediated dimer formation. Interacts strongly with CALM3 and weakly with CALM, the CALM3 interaction is essential for function in filopodial extension and motility. Interacts with ECPAS. Interacts with NEO1. Interacts with ITGB1 and ITGB3. Interacts with VASP. Interacts with DCC and ITGB5; the presence of DCC inhibits ITGB5 binding. Interacts with tubulin; ITGB5 or DCC binding inhibits tubulin binding. The initiator methionine for isoform Headless is removed. As to expression, ubiquitous.

It localises to the cytoplasm. The protein localises to the cytosol. Its subcellular location is the cell projection. The protein resides in the lamellipodium. It is found in the ruffle. It localises to the cytoskeleton. The protein localises to the filopodium tip. Its subcellular location is the cell cortex. The protein resides in the filopodium membrane. In terms of biological role, myosins are actin-based motor molecules with ATPase activity. Unconventional myosins serve in intracellular movements. MYO10 binds to actin filaments and actin bundles and functions as a plus end-directed motor. Moves with higher velocity and takes larger steps on actin bundles than on single actin filaments. The tail domain binds to membranous compartments containing phosphatidylinositol 3,4,5-trisphosphate or integrins, and mediates cargo transport along actin filaments. Regulates cell shape, cell spreading and cell adhesion. Stimulates the formation and elongation of filopodia. In hippocampal neurons it induces the formation of dendritic filopodia by trafficking the actin-remodeling protein VASP to the tips of filopodia, where it promotes actin elongation. Plays a role in formation of the podosome belt in osteoclasts. Functionally, functions as a dominant-negative regulator of isoform 1, suppressing its filopodia-inducing and axon outgrowth-promoting activities. In hippocampal neurons, it increases VASP retention in spine heads to induce spine formation and spine head expansion. This is Unconventional myosin-X (MYO10) from Homo sapiens (Human).